A 295-amino-acid chain; its full sequence is Pyridoxal 5'-phosphate synthase subunit PdxS (295 aa).

Asp25 is a D-ribose 5-phosphate binding site. The Schiff-base intermediate with D-ribose 5-phosphate role is filled by Lys82. Gly154 provides a ligand contact to D-ribose 5-phosphate. Arg166 contributes to the D-glyceraldehyde 3-phosphate binding site. Residues Gly215 and 236–237 contribute to the D-ribose 5-phosphate site; that span reads GS.

It belongs to the PdxS/SNZ family. As to quaternary structure, in the presence of PdxT, forms a dodecamer of heterodimers.

The catalysed reaction is aldehydo-D-ribose 5-phosphate + D-glyceraldehyde 3-phosphate + L-glutamine = pyridoxal 5'-phosphate + L-glutamate + phosphate + 3 H2O + H(+). It participates in cofactor biosynthesis; pyridoxal 5'-phosphate biosynthesis. Functionally, catalyzes the formation of pyridoxal 5'-phosphate from ribose 5-phosphate (RBP), glyceraldehyde 3-phosphate (G3P) and ammonia. The ammonia is provided by the PdxT subunit. Can also use ribulose 5-phosphate and dihydroxyacetone phosphate as substrates, resulting from enzyme-catalyzed isomerization of RBP and G3P, respectively. The chain is Pyridoxal 5'-phosphate synthase subunit PdxS from Staphylococcus carnosus (strain TM300).